The primary structure comprises 284 residues: 4-diphosphocytidyl-2-C-methyl-D-erythritol kinase (284 aa).

Residue Lys-14 is part of the active site. Pro-98 to Ser-108 is an ATP binding site. Residue Asp-140 is part of the active site.

This sequence belongs to the GHMP kinase family. IspE subfamily.

The catalysed reaction is 4-CDP-2-C-methyl-D-erythritol + ATP = 4-CDP-2-C-methyl-D-erythritol 2-phosphate + ADP + H(+). It participates in isoprenoid biosynthesis; isopentenyl diphosphate biosynthesis via DXP pathway; isopentenyl diphosphate from 1-deoxy-D-xylulose 5-phosphate: step 3/6. Catalyzes the phosphorylation of the position 2 hydroxy group of 4-diphosphocytidyl-2C-methyl-D-erythritol. This chain is 4-diphosphocytidyl-2-C-methyl-D-erythritol kinase, found in Shewanella baltica (strain OS155 / ATCC BAA-1091).